The chain runs to 216 residues: Uracil phosphoribosyltransferase (216 aa).

5-phospho-alpha-D-ribose 1-diphosphate contacts are provided by residues R84, R109, and 137–145; that span reads DPMLATGNT. Residues I202 and 207-209 each bind uracil; that span reads GDA. D208 contributes to the 5-phospho-alpha-D-ribose 1-diphosphate binding site.

The protein belongs to the UPRTase family. Requires Mg(2+) as cofactor.

It catalyses the reaction UMP + diphosphate = 5-phospho-alpha-D-ribose 1-diphosphate + uracil. The protein operates within pyrimidine metabolism; UMP biosynthesis via salvage pathway; UMP from uracil: step 1/1. Its activity is regulated as follows. Allosterically activated by GTP. Catalyzes the conversion of uracil and 5-phospho-alpha-D-ribose 1-diphosphate (PRPP) to UMP and diphosphate. The protein is Uracil phosphoribosyltransferase of Synechocystis sp. (strain ATCC 27184 / PCC 6803 / Kazusa).